The following is a 73-amino-acid chain: Maltose-binding periplasmic protein (73 aa).

The first 30 residues, M1–A30, serve as a signal peptide directing secretion.

This sequence belongs to the bacterial solute-binding protein 1 family.

Its subcellular location is the periplasm. Its function is as follows. Involved in the high-affinity maltose membrane transport system. Initial receptor for the active transport of and chemotaxis toward maltooligosaccharides. This Photorhabdus luminescens (Xenorhabdus luminescens) protein is Maltose-binding periplasmic protein (malE).